The primary structure comprises 780 residues: Acyl-CoA dehydrogenase family member 11 (780 aa).

Residue K177 is modified to N6-acetyllysine. Y324 bears the Phosphotyrosine mark. At K391 the chain carries N6-succinyllysine. FAD-binding positions include 504 to 514 (FCMTEPDVASS) and 538 to 540 (WSS). S514 provides a ligand contact to substrate. 629–632 (GPGR) is a substrate binding site. FAD contacts are provided by residues R657, Q727, and 727-731 (QVCGG). Residue G755 coordinates substrate. 756 to 758 (PDE) contacts FAD.

The protein belongs to the acyl-CoA dehydrogenase family. In terms of assembly, homodimer. The cofactor is FAD. As to expression, widely expressed with highest levels in brain followed by liver, heart and kidney.

Its subcellular location is the peroxisome. The protein resides in the mitochondrion membrane. It carries out the reaction a 2,3-saturated acyl-CoA + oxidized [electron-transfer flavoprotein] + H(+) = a (2E)-enoyl-CoA + reduced [electron-transfer flavoprotein]. It catalyses the reaction docosanoyl-CoA + oxidized [electron-transfer flavoprotein] + H(+) = (2E)-docosenoyl-CoA + reduced [electron-transfer flavoprotein]. The catalysed reaction is tetracosanoyl-CoA + oxidized [electron-transfer flavoprotein] + H(+) = (2E)-tetracosenoyl-CoA + reduced [electron-transfer flavoprotein]. The enzyme catalyses eicosanoyl-CoA + oxidized [electron-transfer flavoprotein] + H(+) = (2E)-eicosenoyl-CoA + reduced [electron-transfer flavoprotein]. It carries out the reaction hexacosanoyl-CoA + oxidized [electron-transfer flavoprotein] + H(+) = (2E)-hexacosenoyl-CoA + reduced [electron-transfer flavoprotein]. It catalyses the reaction tricosanoyl-CoA + oxidized [electron-transfer flavoprotein] + H(+) = (2E)-tricosenoyl-CoA + reduced [electron-transfer flavoprotein]. The protein operates within lipid metabolism; fatty acid beta-oxidation. Acyl-CoA dehydrogenase, that exhibits maximal activity towards saturated C22-CoA. Probably participates in beta-oxydation and energy production but could also play a role in the metabolism of specific fatty acids to control fatty acids composition of cellular lipids in brain. The chain is Acyl-CoA dehydrogenase family member 11 (ACAD11) from Homo sapiens (Human).